The sequence spans 327 residues: Ubiquinone biosynthesis protein COQ4, mitochondrial (327 aa).

4 residues coordinate Zn(2+): His-208, Asp-209, His-212, and Glu-224.

The protein belongs to the COQ4 family. In terms of assembly, component of a multi-subunit COQ enzyme complex, composed of at least COQ3, COQ4, COQ5, COQ6, COQ7 and COQ9. Zn(2+) serves as cofactor.

The protein resides in the mitochondrion inner membrane. It carries out the reaction a 4-hydroxy-3-methoxy-5-(all-trans-polyprenyl)benzoate + H(+) = a 2-methoxy-6-(all-trans-polyprenyl)phenol + CO2. Its pathway is cofactor biosynthesis; ubiquinone biosynthesis. Lyase that catalyzes the C1-decarboxylation of 4-hydroxy-3-methoxy-5-(all-trans-polyprenyl)benzoic acid into 2-methoxy-6-(all-trans-polyprenyl)phenol during ubiquinone biosynthesis. The polypeptide is Ubiquinone biosynthesis protein COQ4, mitochondrial (Lachancea thermotolerans (strain ATCC 56472 / CBS 6340 / NRRL Y-8284) (Yeast)).